The primary structure comprises 202 residues: Guanylyl cyclase-activating protein 1 (202 aa).

Gly2 is lipidated: N-myristoyl glycine. Asn3 is modified (deamidated asparagine). EF-hand domains follow at residues 31-49 (SGQL…KNLS), 51-86 (SASQ…VLKG), 87-122 (KVEQ…IRTI), and 131-166 (SAEE…DQML). Residues Asp64, Asn66, Asp68, Tyr70, Glu75, Asp100, Asp102, Asn104, Cys106, Glu111, Asp144, Asn146, Asp148, Glu150, and Glu155 each contribute to the Ca(2+) site.

Homodimer. In terms of tissue distribution, in the retina, expressed in rod photoreceptors (at protein level). Expressed in cone photoreceptors.

The protein localises to the membrane. The protein resides in the photoreceptor inner segment. It localises to the cell projection. Its subcellular location is the cilium. It is found in the photoreceptor outer segment. Stimulates retinal guanylyl cyclase when free calcium ions concentration is low and inhibits guanylyl cyclase when free calcium ions concentration is elevated. This Ca(2+)-sensitive regulation of retinal guanylyl cyclase is a key event in recovery of the dark state of rod photoreceptors following light exposure. May be involved in cone photoreceptor light response and recovery of response in bright light. The chain is Guanylyl cyclase-activating protein 1 (Guca1a) from Mus musculus (Mouse).